The following is a 331-amino-acid chain: PDZ and LIM domain protein 4 (331 aa).

One can recognise a PDZ domain in the interval 1-84; that stretch reads MPHSVTLRGP…HLTLSVSRPE (84 aa). Disordered stretches follow at residues 80-99, 105-152, and 221-243; these read VSRP…KAQA, DSEA…GSNS, and AGEG…ASKL. Ser-112, Ser-116, Ser-120, and Ser-135 each carry phosphoserine. The region spanning 254-313 is the LIM zinc-binding domain; that stretch reads PECTRCGHGIVGTIVKARDKLYHPECFMCSDCGLNLKQRGYFFLDERLYCESHAKARVKP.

Homodimer. Interacts (via C-terminus only or via combined C-terminus and LIM domain, but not LIM domain only) with PTPN13 (via the second or fourth PDZ domains). Found in a complex with PTPN13 and TRIP6. Interacts (via PDZ domain) with ACTN1 and ACTN2 (via C-terminal SDL residues). Interacts (via PDZ domain) with TRIP6 (via the second LIM domain or via the third LIM domain plus C-terminus). Interacts (via LIM domain) with GRIA1 (via C-terminus); this interaction as well as the interaction with alpha-actinin is required for their colocalization in early endosomes. Interacts with PDLIM1. Forms (via LIM domain) a heterodimer with PDLIM3. Interacts directly with SRC (via kinase domain and to a lesser extent the SH2 domain). Phosphorylated on tyrosine residue(s). Can be dephosphorylated by PTPN13.

The protein localises to the cytoplasm. It localises to the cytoskeleton. Its subcellular location is the cell projection. It is found in the dendritic spine. The protein resides in the early endosome membrane. The protein localises to the recycling endosome membrane. It localises to the nucleus. Its subcellular location is the perinuclear region. It is found in the lamellipodium. The protein resides in the synapse. The protein localises to the synaptosome. In terms of biological role, suppresses SRC activation by recognizing and binding to active SRC and facilitating PTPN13-mediated dephosphorylation of SRC 'Tyr-419' leading to its inactivation. Inactivated SRC dissociates from this protein allowing the initiation of a new SRC inactivation cycle. Involved in reorganization of the actin cytoskeleton. In nonmuscle cells, binds to ACTN1 (alpha-actinin-1), increases the affinity of ACTN1 to F-actin (filamentous actin), and promotes formation of actin stress fibers. Involved in regulation of the synaptic AMPA receptor transport in dendritic spines of hippocampal pyramidal neurons directing the receptors toward an insertion at the postsynaptic membrane. Links endosomal surface-internalized GRIA1-containing AMPA receptors to the alpha-actinin/actin cytoskeleton. Increases AMPA receptor-mediated excitatory postsynaptic currents in neurons. This Bos taurus (Bovine) protein is PDZ and LIM domain protein 4 (PDLIM4).